A 397-amino-acid chain; its full sequence is Corticosteroid-binding globulin (397 aa).

The signal sequence occupies residues 1 to 22 (MSLALYTCLFWLCTSGLWTTQA). N-linked (GlcNAc...) asparagine glycans are attached at residues asparagine 89, asparagine 169, asparagine 217, and asparagine 232. Glutamine 247 serves as a coordination point for cortisol. N-linked (GlcNAc...) asparagine glycosylation is present at asparagine 253. Aspartate 279 provides a ligand contact to cortisol. N-linked (GlcNAc...) asparagine glycosylation is present at asparagine 320. A cortisol-binding site is contributed by tryptophan 385.

Belongs to the serpin family. In terms of tissue distribution, expressed by the liver; secreted in plasma.

It localises to the secreted. Functionally, major transport protein for glucocorticoids and progestins in the blood of almost all vertebrate species. The sequence is that of Corticosteroid-binding globulin (Serpina6) from Mus musculus (Mouse).